A 248-amino-acid polypeptide reads, in one-letter code: PF03932 family protein CutC (248 aa).

Belongs to the CutC family.

Its subcellular location is the cytoplasm. In Porphyromonas gingivalis (strain ATCC BAA-308 / W83), this protein is PF03932 family protein CutC.